A 384-amino-acid chain; its full sequence is Sensor protein VanS (384 aa).

2 consecutive transmembrane segments (helical) span residues 21–41 (MYIV…RSMI) and 76–96 (IDIF…RVML). One can recognise a Histidine kinase domain in the interval 161–376 (YLAHDIKTPL…TFRVELPAMP (216 aa)). At H164 the chain carries Phosphohistidine; by autocatalysis. The involved in low-affinity ATP-binding. Exhibits higher affinity for ATP than GTP stretch occupies residues 221-384 (QTITLTKTHI…MPDLVDKRRS (164 aa)).

Post-translationally, autophosphorylated.

It localises to the membrane. It carries out the reaction ATP + protein L-histidine = ADP + protein N-phospho-L-histidine.. With respect to regulation, phosphorylation of VanR inhibited by EDTA. Its function is as follows. Member of the two-component regulatory system VanS/VanR. Functions as a sensor protein kinase which is autophosphorylated at a histidine residue in response to environmental stimuli, such as glycopeptide antibiotics. VanS transfers its phosphate group to transcriptional regulatory protein VanR, thereby modulating expression of target genes. Binds directly to, and autophosphorylation activity is enhanced by, the glycopeptides vancomycin and teicoplanin, in vitro. However it has also been reported that autophosphorylation, phosphate transfer to VanR and dephosphorylation of phospho-VanR are all unaffected by the presence of vancomycin, in vitro. In the absence of vancomycin, negatively regulates VanR-mediated activation of vanS, vanH, vanA and vanX, probably as a result of dephosphorylating phospho-VanR. May inhibit promoter-specific DNA binding by VanR. Involved in conferring vancomycin resistance. The polypeptide is Sensor protein VanS (Enterococcus faecium (Streptococcus faecium)).